Here is a 313-residue protein sequence, read N- to C-terminus: Ubiquinone biosynthesis protein COQ4, mitochondrial (313 aa).

His197, Asp198, His201, and Glu213 together coordinate Zn(2+). Positions 290–313 (QPPDLRELRRKQKKLPEPERENAN) are disordered. Residues 303-313 (KLPEPERENAN) are compositionally biased toward basic and acidic residues.

It belongs to the COQ4 family. Component of a multi-subunit COQ enzyme complex, composed of at least COQ3, COQ4, COQ5, COQ6, COQ7 and COQ9. Zn(2+) is required as a cofactor.

The protein resides in the mitochondrion inner membrane. It carries out the reaction a 4-hydroxy-3-methoxy-5-(all-trans-polyprenyl)benzoate + H(+) = a 2-methoxy-6-(all-trans-polyprenyl)phenol + CO2. It participates in cofactor biosynthesis; ubiquinone biosynthesis. In terms of biological role, lyase that catalyzes the C1-decarboxylation of 4-hydroxy-3-methoxy-5-(all-trans-polyprenyl)benzoic acid into 2-methoxy-6-(all-trans-polyprenyl)phenol during ubiquinone biosynthesis. This chain is Ubiquinone biosynthesis protein COQ4, mitochondrial, found in Meyerozyma guilliermondii (strain ATCC 6260 / CBS 566 / DSM 6381 / JCM 1539 / NBRC 10279 / NRRL Y-324) (Yeast).